Consider the following 451-residue polypeptide: uncharacterized protein (451 aa).

Residues 1 to 22 form the signal peptide; the sequence is MKLKLIFSLFLVLVFCSLFVFG. Asparagine 25, asparagine 45, asparagine 209, asparagine 326, and asparagine 402 each carry an N-linked (GlcNAc...) asparagine glycan.

It localises to the secreted. This is an uncharacterized protein from Dictyostelium discoideum (Social amoeba).